An 828-amino-acid chain; its full sequence is DNA gyrase subunit A (828 aa).

In terms of domain architecture, Topo IIA-type catalytic spans 32 to 497 (LPDVRDGLKP…EVLSLEDEDL (466 aa)). Residue Tyr120 is the O-(5'-phospho-DNA)-tyrosine intermediate of the active site. The GyrA-box motif lies at 524–530 (QKRGGRG).

The protein belongs to the type II topoisomerase GyrA/ParC subunit family. In terms of assembly, heterotetramer, composed of two GyrA and two GyrB chains. In the heterotetramer, GyrA contains the active site tyrosine that forms a transient covalent intermediate with DNA, while GyrB binds cofactors and catalyzes ATP hydrolysis.

Its subcellular location is the cytoplasm. It carries out the reaction ATP-dependent breakage, passage and rejoining of double-stranded DNA.. A type II topoisomerase that negatively supercoils closed circular double-stranded (ds) DNA in an ATP-dependent manner to modulate DNA topology and maintain chromosomes in an underwound state. Negative supercoiling favors strand separation, and DNA replication, transcription, recombination and repair, all of which involve strand separation. Also able to catalyze the interconversion of other topological isomers of dsDNA rings, including catenanes and knotted rings. Type II topoisomerases break and join 2 DNA strands simultaneously in an ATP-dependent manner. This is DNA gyrase subunit A from Streptococcus pyogenes serotype M6 (strain ATCC BAA-946 / MGAS10394).